We begin with the raw amino-acid sequence, 522 residues long: Zinc finger protein STOP1 homolog (522 aa).

Polar residues-rich tracts occupy residues 1 to 12 (MDSGLGRSSETS) and 19 to 40 (MASN…SSMD). 2 disordered regions span residues 1 to 43 (MDSG…DQPP) and 234 to 260 (CGGE…EREN). Basic and acidic residues predominate over residues 244-260 (MEDHDVKESDDGGEREN). The segment at 282 to 304 (HFCLICGKGFKRDANLRMHMRGH) adopts a C2H2-type 1 zinc-finger fold. A C2H2-type 2; atypical zinc finger spans residues 390–421 (KHCGRDKWLCSCGTTFSRKDKLFGHVALFQGH).

The protein resides in the nucleus. In terms of biological role, probable transcription factor that may be involved in aluminum tolerance. The protein is Zinc finger protein STOP1 homolog of Oryza sativa subsp. japonica (Rice).